Reading from the N-terminus, the 657-residue chain is Macrolide export ATP-binding/permease protein MacB (657 aa).

The region spanning 5–242 is the ABC transporter domain; the sequence is LELLDVHRTY…RAVTGESAFD (238 aa). Position 41 to 48 (41 to 48) interacts with ATP; the sequence is GASGSGKS. 4 consecutive transmembrane segments (helical) span residues 276-296, 538-558, 596-616, and 620-640; these read FLSV…MALG, IAAI…LVSV, IGVF…GWAV, and LLSV…FGLW.

Belongs to the ABC transporter superfamily. Macrolide exporter (TC 3.A.1.122) family. In terms of assembly, homodimer.

Its subcellular location is the cell inner membrane. Functionally, non-canonical ABC transporter that contains transmembrane domains (TMD), which form a pore in the inner membrane, and an ATP-binding domain (NBD), which is responsible for energy generation. Confers resistance against macrolides. The chain is Macrolide export ATP-binding/permease protein MacB from Chlorobium phaeobacteroides (strain DSM 266 / SMG 266 / 2430).